Here is a 287-residue protein sequence, read N- to C-terminus: NAD-dependent protein deacylase sir-2.2 (287 aa).

Residues 10–287 enclose the Deacetylase sirtuin-type domain; the sequence is AELCENSLKK…YKISDVLKEM (278 aa). NAD(+) contacts are provided by residues 35–55 and 116–119; these read GAGISTESGIPDYRSKDVGLY and QNVD. Residue H134 is the Proton acceptor of the active site. C142, C145, C196, and C199 together coordinate Zn(2+). Residues 236 to 238, 262 to 264, and I280 contribute to the NAD(+) site; these read GTS and NIG.

The protein belongs to the sirtuin family. Class II subfamily. In terms of assembly, interacts with pyc-1, pcca-1 and mccc-1. Zn(2+) is required as a cofactor. As to expression, ubiquitously expressed with high expression in the pharynx, body wall muscles and gonad.

The protein localises to the mitochondrion matrix. It localises to the mitochondrion. The catalysed reaction is N(6)-acetyl-L-lysyl-[protein] + NAD(+) + H2O = 2''-O-acetyl-ADP-D-ribose + nicotinamide + L-lysyl-[protein]. In terms of biological role, NAD-dependent protein deacylase. Catalyzes the NAD-dependent hydrolysis of acyl groups from lysine residues. Plays a role in oxidative stress resistance. The polypeptide is NAD-dependent protein deacylase sir-2.2 (sir-2.2) (Caenorhabditis elegans).